The primary structure comprises 253 residues: 4-phosphopantoate--beta-alanine ligase (253 aa).

Residues R17, R39, 179-181, 185-186, and 197-198 contribute to the ATP site; these read DLN, RT, and NL.

It belongs to the archaeal phosphopantothenate synthetase family. Homodimer.

The catalysed reaction is (R)-4-phosphopantoate + beta-alanine + ATP = (R)-4'-phosphopantothenate + AMP + diphosphate + H(+). It functions in the pathway cofactor biosynthesis; coenzyme A biosynthesis. Catalyzes the condensation of (R)-4-phosphopantoate and beta-alanine to 4'-phosphopantothenate in the CoA biosynthesis pathway. This is 4-phosphopantoate--beta-alanine ligase from Methanosarcina mazei (strain ATCC BAA-159 / DSM 3647 / Goe1 / Go1 / JCM 11833 / OCM 88) (Methanosarcina frisia).